The sequence spans 362 residues: Shewanella-like protein phosphatase 1 (362 aa).

An N-terminal signal peptide occupies residues 1 to 23 (MIFKKALYILLFLYIAIVKKGES). Mn(2+) is bound by residues D65, H67, D101, and N136. The active-site Proton donor is H137. H196 serves as a coordination point for Mn(2+).

Belongs to the metallophosphoesterase superfamily. SLP family. Mn(2+) serves as cofactor.

Functionally, phosphatase which plays an essential role in the development and differentiation of the ookinete and in the formation of ookinete micronemes. In Plasmodium berghei (strain Anka), this protein is Shewanella-like protein phosphatase 1.